The chain runs to 417 residues: D-amino acid dehydrogenase (417 aa).

3-17 (IIVLGAGVIGVTSAY) serves as a coordination point for FAD.

It belongs to the DadA oxidoreductase family. Requires FAD as cofactor.

The catalysed reaction is a D-alpha-amino acid + A + H2O = a 2-oxocarboxylate + AH2 + NH4(+). The protein operates within amino-acid degradation; D-alanine degradation; NH(3) and pyruvate from D-alanine: step 1/1. Functionally, oxidative deamination of D-amino acids. The protein is D-amino acid dehydrogenase of Azorhizobium caulinodans (strain ATCC 43989 / DSM 5975 / JCM 20966 / LMG 6465 / NBRC 14845 / NCIMB 13405 / ORS 571).